A 282-amino-acid chain; its full sequence is Protoheme IX farnesyltransferase (282 aa).

Helical transmembrane passes span 9–29, 39–59, 79–99, 102–122, 139–159, 165–185, 210–230, 231–251, and 261–281; these read LAKP…FLLA, LPLF…GCVF, LVTG…LLIL, LVLY…GFIV, VLGG…VVNI, LALF…IAML, IMLF…VLGS, ADLF…YKSI, and VFAK…CLTM.

Belongs to the UbiA prenyltransferase family. Protoheme IX farnesyltransferase subfamily.

The protein resides in the cell inner membrane. The catalysed reaction is heme b + (2E,6E)-farnesyl diphosphate + H2O = Fe(II)-heme o + diphosphate. It participates in porphyrin-containing compound metabolism; heme O biosynthesis; heme O from protoheme: step 1/1. Its function is as follows. Converts heme B (protoheme IX) to heme O by substitution of the vinyl group on carbon 2 of heme B porphyrin ring with a hydroxyethyl farnesyl side group. The polypeptide is Protoheme IX farnesyltransferase (Francisella tularensis subsp. novicida (strain U112)).